Consider the following 234-residue polypeptide: DNA repair protein RecO (234 aa).

Belongs to the RecO family.

In terms of biological role, involved in DNA repair and RecF pathway recombination. The sequence is that of DNA repair protein RecO from Halorhodospira halophila (strain DSM 244 / SL1) (Ectothiorhodospira halophila (strain DSM 244 / SL1)).